A 93-amino-acid chain; its full sequence is UPF0147 protein PF0239 (93 aa).

It belongs to the UPF0147 family.

The sequence is that of UPF0147 protein PF0239 from Pyrococcus furiosus (strain ATCC 43587 / DSM 3638 / JCM 8422 / Vc1).